Consider the following 144-residue polypeptide: Large ribosomal subunit protein uL16 (144 aa).

The protein belongs to the universal ribosomal protein uL16 family. In terms of assembly, part of the 50S ribosomal subunit.

In terms of biological role, binds 23S rRNA and is also seen to make contacts with the A and possibly P site tRNAs. The sequence is that of Large ribosomal subunit protein uL16 from Acidobacterium capsulatum (strain ATCC 51196 / DSM 11244 / BCRC 80197 / JCM 7670 / NBRC 15755 / NCIMB 13165 / 161).